We begin with the raw amino-acid sequence, 424 residues long: Virion nicking-joining enzyme (424 aa).

2 PLD phosphodiesterase domains span residues 110–137 (LGGV…DWRS) and 320–346 (YSRV…TGNY).

The protein belongs to the orthopoxvirus OPG042 family.

It localises to the virion. Its function is as follows. DNA nicking enzyme that cleaves extruded cruciform DNA at its tip. Probably nicks viral hairpins. This chain is Virion nicking-joining enzyme (OPG042), found in Homo sapiens (Human).